The chain runs to 273 residues: MRKLLRVLLACLAAPLLHCAWAQPATGKTEVLWLGQSAFRISTPGGKVIVTDPWLKLNPLTPAEYKNLQALGKVDVILVTHGHWDHFADAPELALLNQVPMHAPGDMNQTVGLLGILPPNLVPRFNKSGTITPAPGIKVTAVKAEHSSVIVWKNPSTGKDESHPGGEPVGFIIELENGFRIYHMGDTGLFSDMRFIAEYYKPDLVLMPIGGHFTMGPADAAYATREWLKPKTVIPMHYGANPLGRGTPTEYMRALGDSGTRVLPLKPGEKAEF.

This sequence belongs to the UPF0173 family.

This is UPF0173 metal-dependent hydrolase Bpro_4324 from Polaromonas sp. (strain JS666 / ATCC BAA-500).